The following is a 277-amino-acid chain: Shikimate dehydrogenase (NADP(+)) (277 aa).

Shikimate is bound by residues 20–22 (SLS) and threonine 67. The active-site Proton acceptor is lysine 71. Aspartate 83 contacts NADP(+). The shikimate site is built by asparagine 92 and aspartate 107. NADP(+) contacts are provided by residues 131 to 135 (GAGGV) and isoleucine 219. Tyrosine 221 serves as a coordination point for shikimate. Glycine 242 is a binding site for NADP(+).

This sequence belongs to the shikimate dehydrogenase family. As to quaternary structure, homodimer.

The enzyme catalyses shikimate + NADP(+) = 3-dehydroshikimate + NADPH + H(+). It participates in metabolic intermediate biosynthesis; chorismate biosynthesis; chorismate from D-erythrose 4-phosphate and phosphoenolpyruvate: step 4/7. Its function is as follows. Involved in the biosynthesis of the chorismate, which leads to the biosynthesis of aromatic amino acids. Catalyzes the reversible NADPH linked reduction of 3-dehydroshikimate (DHSA) to yield shikimate (SA). The sequence is that of Shikimate dehydrogenase (NADP(+)) from Pelobacter propionicus (strain DSM 2379 / NBRC 103807 / OttBd1).